A 316-amino-acid chain; its full sequence is Adenine deaminase (316 aa).

Residues H14, H16, and H194 each coordinate Zn(2+). The active-site Proton donor is E197. Zn(2+) is bound at residue D275. Residue D276 coordinates substrate.

This sequence belongs to the metallo-dependent hydrolases superfamily. Adenosine and AMP deaminases family. Adenine deaminase type 2 subfamily. The cofactor is Zn(2+).

It carries out the reaction adenine + H2O + H(+) = hypoxanthine + NH4(+). Functionally, catalyzes the hydrolytic deamination of adenine to hypoxanthine. Plays an important role in the purine salvage pathway and in nitrogen catabolism. The sequence is that of Adenine deaminase from Pseudomonas aeruginosa (strain UCBPP-PA14).